Here is a 113-residue protein sequence, read N- to C-terminus: MTLFFFSLGTRSFIDTESICNSRNVIENIYSNNNNNNNNNNNNNNNNNNNNNNNNNNNNNNNNNNNNNNINNNNNSNNNNNNNNNNNNNNNNNNNNNNSSSFEYSPTKFNLQY.

The disordered stretch occupies residues 31–113; that stretch reads SNNNNNNNNN…YSPTKFNLQY (83 aa). The segment covering 32–98 has biased composition (low complexity); that stretch reads NNNNNNNNNN…NNNNNNNNNN (67 aa). The span at 99 to 113 shows a compositional bias: polar residues; it reads SSSFEYSPTKFNLQY.

This is an uncharacterized protein from Dictyostelium discoideum (Social amoeba).